Consider the following 44-residue polypeptide: Iota-conotoxin-like R11.11 (44 aa).

Intrachain disulfides connect Cys-5–Cys-19, Cys-12–Cys-22, Cys-18–Cys-27, and Cys-21–Cys-36. Arg-44 is a propeptide (removed by a carboxypeptidase).

It belongs to the conotoxin I1 superfamily. As to expression, expressed by the venom duct.

Its subcellular location is the secreted. In terms of biological role, iota-conotoxins bind to voltage-gated sodium channels (Nav) and act as agonists by shifting the voltage-dependence of activation to more hyperpolarized levels. Produces general excitatory symptoms. The polypeptide is Iota-conotoxin-like R11.11 (Conus radiatus (Rayed cone)).